The following is a 125-amino-acid chain: Phosphoribosyl-AMP cyclohydrolase (125 aa).

Asp74 is a Mg(2+) binding site. Cys75 lines the Zn(2+) pocket. Asp76 and Asp78 together coordinate Mg(2+). The Zn(2+) site is built by Cys92 and Cys99.

The protein belongs to the PRA-CH family. As to quaternary structure, homodimer. The cofactor is Mg(2+). Requires Zn(2+) as cofactor.

It is found in the cytoplasm. It catalyses the reaction 1-(5-phospho-beta-D-ribosyl)-5'-AMP + H2O = 1-(5-phospho-beta-D-ribosyl)-5-[(5-phospho-beta-D-ribosylamino)methylideneamino]imidazole-4-carboxamide. Its pathway is amino-acid biosynthesis; L-histidine biosynthesis; L-histidine from 5-phospho-alpha-D-ribose 1-diphosphate: step 3/9. Its function is as follows. Catalyzes the hydrolysis of the adenine ring of phosphoribosyl-AMP. In Geobacter metallireducens (strain ATCC 53774 / DSM 7210 / GS-15), this protein is Phosphoribosyl-AMP cyclohydrolase.